The following is a 239-amino-acid chain: Lactose-binding lectin-2 (239 aa).

Mn(2+) is bound by residues Glu122 and Asp124. Residues Asp124, Tyr126, Asn128, and Asp131 each coordinate Ca(2+). Mn(2+) contacts are provided by Asp131 and His137.

This sequence belongs to the leguminous lectin family. Homotetramer. As to expression, seed.

It localises to the vacuole. Its subcellular location is the aleurone grain. In terms of biological role, lactose-binding lectin. Also binds derivatives of galactose, glucose, lactose, and mannose. Binds O-glycoproteins such as mucins more strongly than N-glycoproteins. Shows agglutinating activity towards rabbit erythrocytes. The protein is Lactose-binding lectin-2 of Cymbosema roseum (Dioclea purpurea).